Here is a 627-residue protein sequence, read N- to C-terminus: DNA mismatch repair protein MutL (627 aa).

A disordered region spans residues 376–404 (APASTNEVREGSAARAGNYQPPEPPSREA).

It belongs to the DNA mismatch repair MutL/HexB family.

In terms of biological role, this protein is involved in the repair of mismatches in DNA. It is required for dam-dependent methyl-directed DNA mismatch repair. May act as a 'molecular matchmaker', a protein that promotes the formation of a stable complex between two or more DNA-binding proteins in an ATP-dependent manner without itself being part of a final effector complex. In Aeromonas salmonicida (strain A449), this protein is DNA mismatch repair protein MutL.